Consider the following 212-residue polypeptide: Protein-L-isoaspartate O-methyltransferase 1 (212 aa).

Residue Ser60 is part of the active site.

It belongs to the methyltransferase superfamily. L-isoaspartyl/D-aspartyl protein methyltransferase family.

It is found in the cytoplasm. The catalysed reaction is [protein]-L-isoaspartate + S-adenosyl-L-methionine = [protein]-L-isoaspartate alpha-methyl ester + S-adenosyl-L-homocysteine. In terms of biological role, catalyzes the methyl esterification of L-isoaspartyl residues in peptides and proteins that result from spontaneous decomposition of normal L-aspartyl and L-asparaginyl residues. It plays a role in the repair and/or degradation of damaged proteins. The protein is Protein-L-isoaspartate O-methyltransferase 1 of Anaeromyxobacter sp. (strain Fw109-5).